The following is a 122-amino-acid chain: Large ribosomal subunit protein uL14 (122 aa).

The protein belongs to the universal ribosomal protein uL14 family. Part of the 50S ribosomal subunit. Forms a cluster with proteins L3 and L19. In the 70S ribosome, L14 and L19 interact and together make contacts with the 16S rRNA in bridges B5 and B8.

Its function is as follows. Binds to 23S rRNA. Forms part of two intersubunit bridges in the 70S ribosome. The protein is Large ribosomal subunit protein uL14 of Mycolicibacterium vanbaalenii (strain DSM 7251 / JCM 13017 / BCRC 16820 / KCTC 9966 / NRRL B-24157 / PYR-1) (Mycobacterium vanbaalenii).